A 165-amino-acid polypeptide reads, in one-letter code: Large ribosomal subunit protein uL10 (165 aa).

It belongs to the universal ribosomal protein uL10 family. As to quaternary structure, part of the ribosomal stalk of the 50S ribosomal subunit. The N-terminus interacts with L11 and the large rRNA to form the base of the stalk. The C-terminus forms an elongated spine to which L12 dimers bind in a sequential fashion forming a multimeric L10(L12)X complex.

Its function is as follows. Forms part of the ribosomal stalk, playing a central role in the interaction of the ribosome with GTP-bound translation factors. This chain is Large ribosomal subunit protein uL10, found in Sodalis glossinidius (strain morsitans).